The sequence spans 976 residues: Leucine--tRNA ligase (976 aa).

Over residues 1-23 (MTESPTTTPGSTSGAPSGVPSGV) the composition is skewed to low complexity. Residues 1–34 (MTESPTTTPGSTSGAPSGVPSGVNDAESDAPRHR) are disordered. The 'HIGH' region signature appears at 86-97 (PYPSGEGLHVGH). Residues 745-749 (KIGKS) carry the 'KMSKS' region motif. Lys-748 is a binding site for ATP.

This sequence belongs to the class-I aminoacyl-tRNA synthetase family.

Its subcellular location is the cytoplasm. The enzyme catalyses tRNA(Leu) + L-leucine + ATP = L-leucyl-tRNA(Leu) + AMP + diphosphate. This Mycobacterium ulcerans (strain Agy99) protein is Leucine--tRNA ligase.